The chain runs to 304 residues: D-tagatose-1-phosphate kinase (304 aa).

D250 functions as the Proton acceptor in the catalytic mechanism.

This sequence belongs to the carbohydrate kinase PfkB family. The cofactor is Mg(2+).

The enzyme catalyses alpha-D-tagatopyranose 1-phosphate + ATP = D-tagatofuranose 1,6-bisphosphate + ADP + H(+). It participates in carbohydrate degradation. Its activity is regulated as follows. Activity is inhibited by tagatose-6-phosphate and fructose-6-phosphate. Its function is as follows. Kinase involved in a D-tagatose catabolic pathway. Catalyzes the phosphorylation of D-tagatose-1-phosphate (Tag-1P) to D-tagatose-1,6-bisphosphate. Can also use D-fructose-1-phosphate, with 40-fold lower catalytic efficiency, but not tagatose-6-phosphate or fructose-6-phosphate. The substrate, which occurs in a pyranose form in solution, may undergo a change to the furanose conformation after binding to the enzyme, in order to permit phosphorylation at C-6. The protein is D-tagatose-1-phosphate kinase of Bacillus licheniformis (strain ATCC 14580 / DSM 13 / JCM 2505 / CCUG 7422 / NBRC 12200 / NCIMB 9375 / NCTC 10341 / NRRL NRS-1264 / Gibson 46).